A 119-amino-acid chain; its full sequence is Ig heavy chain V region X44 (119 aa).

The region spanning 1–117 (EVKLLESGGG…WGQGTLVTVS (117 aa)) is the Ig-like domain.

This Mus musculus (Mouse) protein is Ig heavy chain V region X44.